A 198-amino-acid polypeptide reads, in one-letter code: Protein GrpE (198 aa).

A compositionally biased stretch (basic and acidic residues) spans 1-14 (MSNEENKINEEALK). The disordered stretch occupies residues 1 to 20 (MSNEENKINEEALKQQDAAE).

Belongs to the GrpE family. Homodimer.

It is found in the cytoplasm. Functionally, participates actively in the response to hyperosmotic and heat shock by preventing the aggregation of stress-denatured proteins, in association with DnaK and GrpE. It is the nucleotide exchange factor for DnaK and may function as a thermosensor. Unfolded proteins bind initially to DnaJ; upon interaction with the DnaJ-bound protein, DnaK hydrolyzes its bound ATP, resulting in the formation of a stable complex. GrpE releases ADP from DnaK; ATP binding to DnaK triggers the release of the substrate protein, thus completing the reaction cycle. Several rounds of ATP-dependent interactions between DnaJ, DnaK and GrpE are required for fully efficient folding. This is Protein GrpE from Vibrio vulnificus (strain YJ016).